The following is a 156-amino-acid chain: Transcription elongation factor GreA (156 aa).

Residues 2-27 (EKTFPMTKEGLDKLKAELENLKLVKR) are a coiled coil.

It belongs to the GreA/GreB family.

Functionally, necessary for efficient RNA polymerase transcription elongation past template-encoded arresting sites. The arresting sites in DNA have the property of trapping a certain fraction of elongating RNA polymerases that pass through, resulting in locked ternary complexes. Cleavage of the nascent transcript by cleavage factors such as GreA or GreB allows the resumption of elongation from the new 3'terminus. GreA releases sequences of 2 to 3 nucleotides. The chain is Transcription elongation factor GreA from Lactococcus lactis subsp. cremoris (strain SK11).